Reading from the N-terminus, the 739-residue chain is Nucleoprotein (739 aa).

An oligomerization, N-terminal arm region spans residues 1–25; that stretch reads MDSRPQKIWMAPSLTESDMDYHKIL. An NP core region spans residues 26-405; sequence TAGLSVQQGI…TLRKERLAKL (380 aa). The segment at 415 to 647 is disordered; sequence PKTSGHYDDD…DSDNTQSEHS (233 aa). 2 stretches are compositionally biased toward low complexity: residues 449–458 and 504–514; these read SQDTTIPDVV and KGGQQKNSQKG. The Host PPP2R5C-binding motif signature appears at 562–567; sequence LTPINE. The span at 567 to 579 shows a compositional bias: acidic residues; it reads EEADPLDDADDET. Positions 606 to 611 match the VP30-binding motif motif; the sequence is PPAPVY. Residues 611-638 are compositionally biased toward basic and acidic residues; the sequence is YRDHSEKKELPQDEQQDQDHTQEARNQD.

Belongs to the filoviruses nucleoprotein family. As to quaternary structure, homooligomer. Homomultimerizes to form the nucleocapsid. Binds to viral genomic RNA. Interacts with VP35 and VP30 to form the nucleocapsid. Interacts with host PPP2R5C; this interaction leads to VP30 dephosphorylation and viral transcription. Interacts with VP24; this interaction facilitates nucleocapsid assembly and genome packaging. Interacts with matrix protein VP40; this interaction allows recruitment of the nucleocapsid into progeny virions. Interacts with host STAU1. Interacts with host NXF1 (via RNA-binding domain); this interaction recruits NXF1 to the inclusion bodies were viral replication takes place, probably to export viral mRNA-NXF1 complexes from these sites. Interacts with host CCDC92; this interaction sequesters NP in the host cytoplasm. Interacts with host TRIM14. Phosphorylated by host. In terms of processing, O-glycosylated by host. Post-translationally, acetylated by host EP300 in vitro.

The protein resides in the virion. It localises to the host cytoplasm. Oligomerizes into helical capsid to encapsidate the viral genome, protecting it from nucleases and the cellular innate immune response. VP35 binds to and stabilizes monomeric NP, keeping it soluble. Upon virus replication, NP is recruited to bind cooperatively viral genomic RNA and VP35 is released. The encapsidated genomic RNA is termed the nucleocapsid and serves as template for transcription and replication. The nucleocapsid is helical with a pitch of 10.81 NP per turn and a diameter of about 22nm. Each NP binds to six nucleotides of viral genomic RNA, three being exposed to the solvant and three hidden into the nucleocapsid. Also recruits host PPP2R5C phosphatase to dephosphorylate VP30 and thereby promote viral transcription. Upon virion assembly and budding, NP binds to VP24 and possibly host STAU1. In Epomops franqueti (Franquet's epauletted fruit bat), this protein is Nucleoprotein (NP).